We begin with the raw amino-acid sequence, 592 residues long: Multidrug transporter AQR1 (592 aa).

A disordered region spans residues 1–77; sequence MVESGPHSIN…EISSTHSQDA (77 aa). Residues 99–119 form a helical membrane-spanning segment; that stretch reads WCMVALLTACGFWSSLGSPIY. Asparagine 138 is a glycosylation site (N-linked (GlcNAc...) asparagine). Helical transmembrane passes span 139-159, 166-186, 188-208, 231-251, and 255-275; these read ITVV…GGLA, PVLL…ACAP, YGVI…SIAI, GFVL…AAAW, and AIFW…FALL. N-linked (GlcNAc...) asparagine glycosylation occurs at asparagine 285. Transmembrane regions (helical) follow at residues 340-360, 374-394, 432-452, 459-479, 497-517, and 523-543; these read IFLS…MLSA, LTII…GSFA, LQSV…FGWS, IPSI…TLSA, SCFN…FAKM, and VGGT…LMFI.

This sequence belongs to the major facilitator superfamily. CAR1 family.

Its subcellular location is the cell membrane. Functionally, multidrug transporter acts as a determinant of resistance to acetic acid, flucytosine and clotrimazole, these 3 compounds acting synergistically against the pathogen. Reduces the intracellular accumulation of the antifungal agents flucytosine and, to a moderate extent, of clotrimazole. Its role in acetic acid resistance may be indirect, presumably through the transport of a still unidentified physiological substrate. This is Multidrug transporter AQR1 from Candida glabrata (strain ATCC 2001 / BCRC 20586 / JCM 3761 / NBRC 0622 / NRRL Y-65 / CBS 138) (Yeast).